The chain runs to 205 residues: Holliday junction branch migration complex subunit RuvA (205 aa).

Residues 1–64 (MIGKLKGIID…EDQIKLFGFR (64 aa)) are domain I. Residues 65–143 (TDTEREWFRL…ALSAVDPAVV (79 aa)) are domain II. The tract at residues 144-154 (KLSGAIDDNRA) is flexible linker. The domain III stretch occupies residues 154-205 (APRAVTDAISALVNLGYGQPQAAAAVATASRTAGEDAETAQLIKLGLKELSK).

Belongs to the RuvA family. Homotetramer. Forms an RuvA(8)-RuvB(12)-Holliday junction (HJ) complex. HJ DNA is sandwiched between 2 RuvA tetramers; dsDNA enters through RuvA and exits via RuvB. An RuvB hexamer assembles on each DNA strand where it exits the tetramer. Each RuvB hexamer is contacted by two RuvA subunits (via domain III) on 2 adjacent RuvB subunits; this complex drives branch migration. In the full resolvosome a probable DNA-RuvA(4)-RuvB(12)-RuvC(2) complex forms which resolves the HJ.

The protein resides in the cytoplasm. The RuvA-RuvB-RuvC complex processes Holliday junction (HJ) DNA during genetic recombination and DNA repair, while the RuvA-RuvB complex plays an important role in the rescue of blocked DNA replication forks via replication fork reversal (RFR). RuvA specifically binds to HJ cruciform DNA, conferring on it an open structure. The RuvB hexamer acts as an ATP-dependent pump, pulling dsDNA into and through the RuvAB complex. HJ branch migration allows RuvC to scan DNA until it finds its consensus sequence, where it cleaves and resolves the cruciform DNA. This is Holliday junction branch migration complex subunit RuvA from Rhodopseudomonas palustris (strain TIE-1).